The primary structure comprises 346 residues: Methylthioribose-1-phosphate isomerase (346 aa).

Residues Arg-48–Ala-50, Arg-88, and Gln-192 contribute to the substrate site. Asp-233 acts as the Proton donor in catalysis. A substrate-binding site is contributed by Asn-243–Lys-244.

It belongs to the eIF-2B alpha/beta/delta subunits family. MtnA subfamily.

The catalysed reaction is 5-(methylsulfanyl)-alpha-D-ribose 1-phosphate = 5-(methylsulfanyl)-D-ribulose 1-phosphate. It participates in amino-acid biosynthesis; L-methionine biosynthesis via salvage pathway; L-methionine from S-methyl-5-thio-alpha-D-ribose 1-phosphate: step 1/6. Functionally, catalyzes the interconversion of methylthioribose-1-phosphate (MTR-1-P) into methylthioribulose-1-phosphate (MTRu-1-P). The protein is Methylthioribose-1-phosphate isomerase of Alcanivorax borkumensis (strain ATCC 700651 / DSM 11573 / NCIMB 13689 / SK2).